A 738-amino-acid polypeptide reads, in one-letter code: Exocyst complex component 3 (738 aa).

Positions 28–91 (LEKVEQYRHR…DEVERLLRGV (64 aa)) form a coiled coil.

The protein belongs to the SEC6 family. The exocyst complex is composed of Sec3/Exoc1, Sec5/Exoc2, Sec6/Exoc3, Sec8/Exoc4, Sec10/Exoc5, Sec15/Exoc6, Exo70/Exoc7 and Exo84/Exoc8.

Functionally, component of the exocyst complex involved in the docking of exocytic vesicles with fusion sites on the plasma membrane. This is Exocyst complex component 3 from Drosophila melanogaster (Fruit fly).